We begin with the raw amino-acid sequence, 245 residues long: 8-amino-3,8-dideoxy-manno-octulosonate cytidylyltransferase (245 aa).

It belongs to the KdsB family.

The protein localises to the cytoplasm. It carries out the reaction 8-amino-3,8-dideoxy-alpha-D-manno-octulosonate + CTP = CMP-8-amino-3,8-dideoxy-alpha-D-manno-oct-2-ulosonate + diphosphate. It functions in the pathway bacterial outer membrane biogenesis; lipopolysaccharide biosynthesis. Activates KDO8N (a required 8-carbon sugar) for incorporation into bacterial lipopolysaccharide in the Shewanella genus. In Shewanella amazonensis (strain ATCC BAA-1098 / SB2B), this protein is 8-amino-3,8-dideoxy-manno-octulosonate cytidylyltransferase.